The primary structure comprises 1182 residues: WD repeat-containing protein on Y chromosome (1182 aa).

WD repeat units lie at residues 155–199 (EEIT…LRSA), 323–362 (RIPLGVSVFYVSEIKNILVTGGPDTFVRIWDVYISSEPSA), 366–405 (GHNGGIVAVFVQPEENKVYSVDYHKIIKVWDLQEHTLLQT), 456–495 (THAAPVSVVLYNRLFRNIVTCGLDSYIIVWDPWTGRRKII), 508–547 (TIDIEITAACFDPLEQFLLTGARDGSLKIWNYNNAVVVRN), 595–635 (FHTD…RRYN), 740–779 (KTGDCVLTMATDRKNRFLYTGTAFGYIKVWHIVNYCIPKA), and 823–862 (GHLKAINSIGFINLPKIIFSGSHDYSCRLWTQGGRYLGTL). The disordered stretch occupies residues 1031-1182 (TKAGANLDQP…PKAKTDRETH (152 aa)). 2 stretches are compositionally biased toward low complexity: residues 1079-1092 (GVSSGYGKVSVSQG) and 1103-1121 (TTSLSKPKTSSSPSKPKGS).

This is WD repeat-containing protein on Y chromosome from Drosophila virilis (Fruit fly).